The following is a 184-amino-acid chain: U3 small nucleolar ribonucleoprotein protein IMP3 (184 aa).

An S4 RNA-binding domain is found at 109 to 175; that stretch reads RRLPTVLLKL…IKRHVLEYNE (67 aa).

This sequence belongs to the universal ribosomal protein uS4 family. Part of the small subunit (SSU) processome, composed of more than 70 proteins and the RNA chaperone small nucleolar RNA (snoRNA) U3. Component of a heterotrimeric complex containing IMP3, IMP4 and MPHOSPH10. Interacts with MPHOSPH10.

Its subcellular location is the nucleus. The protein localises to the nucleolus. Functionally, component of the 60-80S U3 small nucleolar ribonucleoprotein (U3 snoRNP). Required for the early cleavages during pre-18S ribosomal RNA processing. Part of the small subunit (SSU) processome, first precursor of the small eukaryotic ribosomal subunit. During the assembly of the SSU processome in the nucleolus, many ribosome biogenesis factors, an RNA chaperone and ribosomal proteins associate with the nascent pre-rRNA and work in concert to generate RNA folding, modifications, rearrangements and cleavage as well as targeted degradation of pre-ribosomal RNA by the RNA exosome. This Homo sapiens (Human) protein is U3 small nucleolar ribonucleoprotein protein IMP3.